A 363-amino-acid chain; its full sequence is Spermatogenesis-associated protein 22 (363 aa).

Polar residues-rich tracts occupy residues 1–12 and 145–157; these read MKRSLNENSARS and SCPM…QQKQ. Disordered regions lie at residues 1–51 and 145–169; these read MKRS…DNYD and SCPM…LPRN.

Component of a multiprotein complex with MEIOB and RPA2. Interacts with MEIOB. Interacts with the complex BRME1:HSF2BP:BRCA2. In terms of tissue distribution, expressed in testis.

The protein localises to the chromosome. Meiosis-specific protein required for homologous recombination in meiosis I. This Macaca fascicularis (Crab-eating macaque) protein is Spermatogenesis-associated protein 22 (SPATA22).